We begin with the raw amino-acid sequence, 149 residues long: Calmodulin (149 aa).

Ala2 is subject to N-acetylalanine. EF-hand domains lie at 8–43, 44–79, 81–116, and 117–149; these read EQIA…VGQN, PTEA…KMKD, DSEE…LGEK, and LTDE…MMSK. Residues Asp21, Asp23, Asp25, Thr27, Glu32, Asp57, Asp59, Asn61, Thr63, Glu68, Asp94, Asp96, Asn98, Glu105, Asp130, Asp132, Asp134, Gln136, and Glu141 each contribute to the Ca(2+) site.

Belongs to the calmodulin family.

Its function is as follows. Calmodulin mediates the control of a large number of enzymes, ion channels and other proteins by Ca(2+). Among the enzymes to be stimulated by the calmodulin-Ca(2+) complex are a number of protein kinases and phosphatases. The polypeptide is Calmodulin (CMD1) (Achlya klebsiana).